A 138-amino-acid chain; its full sequence is Large ribosomal subunit protein uL16 (138 aa).

Belongs to the universal ribosomal protein uL16 family. As to quaternary structure, part of the 50S ribosomal subunit.

In terms of biological role, binds 23S rRNA and is also seen to make contacts with the A and possibly P site tRNAs. The protein is Large ribosomal subunit protein uL16 of Syntrophobacter fumaroxidans (strain DSM 10017 / MPOB).